We begin with the raw amino-acid sequence, 279 residues long: 2-dehydro-3-deoxyphosphooctonate aldolase (279 aa).

This sequence belongs to the KdsA family.

Its subcellular location is the cytoplasm. The catalysed reaction is D-arabinose 5-phosphate + phosphoenolpyruvate + H2O = 3-deoxy-alpha-D-manno-2-octulosonate-8-phosphate + phosphate. It functions in the pathway carbohydrate biosynthesis; 3-deoxy-D-manno-octulosonate biosynthesis; 3-deoxy-D-manno-octulosonate from D-ribulose 5-phosphate: step 2/3. Its pathway is bacterial outer membrane biogenesis; lipopolysaccharide biosynthesis. This chain is 2-dehydro-3-deoxyphosphooctonate aldolase, found in Aromatoleum aromaticum (strain DSM 19018 / LMG 30748 / EbN1) (Azoarcus sp. (strain EbN1)).